The chain runs to 209 residues: DNA transformation protein TfoX1 (209 aa).

This sequence belongs to the Sxy/TfoX family.

Its function is as follows. Required for DNA transformation jointly with TfoY (tfoX2). In Aliivibrio fischeri (strain ATCC 700601 / ES114) (Vibrio fischeri), this protein is DNA transformation protein TfoX1.